The primary structure comprises 185 residues: Ribosome-recycling factor (185 aa).

The protein belongs to the RRF family.

The protein localises to the cytoplasm. Functionally, responsible for the release of ribosomes from messenger RNA at the termination of protein biosynthesis. May increase the efficiency of translation by recycling ribosomes from one round of translation to another. In Shewanella baltica (strain OS185), this protein is Ribosome-recycling factor.